We begin with the raw amino-acid sequence, 83 residues long: Small ribosomal subunit protein bS20 (83 aa).

It belongs to the bacterial ribosomal protein bS20 family.

Functionally, binds directly to 16S ribosomal RNA. The chain is Small ribosomal subunit protein bS20 from Amoebophilus asiaticus (strain 5a2).